We begin with the raw amino-acid sequence, 329 residues long: Sialic acid-binding periplasmic protein SiaP (329 aa).

The N-terminal stretch at 1–23 is a signal peptide; that stretch reads MMKLTKLFLATAISLGVSSAVLA. Positions 33, 72, 90, 150, 170, and 210 each coordinate N-acetyl-beta-neuraminate.

It belongs to the bacterial solute-binding protein 7 family. In terms of assembly, the complex comprises the extracytoplasmic solute receptor protein SiaP, and the fused transmembrane protein SiaT.

Its subcellular location is the periplasm. Its function is as follows. Part of the tripartite ATP-independent periplasmic (TRAP) transport system SiaPT involved in the uptake of sialic acid (N-acetyl-beta-neuraminate). This protein specifically binds sialic acid with high affinity. N-Acetylneuraminate (sialic acid) can then be incorporated into the lipooligosaccharides (LOS) as a terminal non-reducing sugar, protecting the bacterium from complement-mediated killing by normal human serum. The polypeptide is Sialic acid-binding periplasmic protein SiaP (siaP) (Haemophilus influenzae (strain ATCC 51907 / DSM 11121 / KW20 / Rd)).